Consider the following 335-residue polypeptide: Acetyl-coenzyme A carboxylase carboxyl transferase subunit alpha (335 aa).

The 255-residue stretch at 40–294 folds into the CoA carboxyltransferase C-terminal domain; the sequence is QLETLAARRR…KEAIEKHLNA (255 aa).

The protein belongs to the AccA family. In terms of assembly, acetyl-CoA carboxylase is a heterohexamer composed of biotin carboxyl carrier protein (AccB), biotin carboxylase (AccC) and two subunits each of ACCase subunit alpha (AccA) and ACCase subunit beta (AccD).

The protein resides in the cytoplasm. It carries out the reaction N(6)-carboxybiotinyl-L-lysyl-[protein] + acetyl-CoA = N(6)-biotinyl-L-lysyl-[protein] + malonyl-CoA. It functions in the pathway lipid metabolism; malonyl-CoA biosynthesis; malonyl-CoA from acetyl-CoA: step 1/1. In terms of biological role, component of the acetyl coenzyme A carboxylase (ACC) complex. First, biotin carboxylase catalyzes the carboxylation of biotin on its carrier protein (BCCP) and then the CO(2) group is transferred by the carboxyltransferase to acetyl-CoA to form malonyl-CoA. The sequence is that of Acetyl-coenzyme A carboxylase carboxyl transferase subunit alpha from Prochlorococcus marinus (strain MIT 9215).